The primary structure comprises 134 residues: RxLR effector protein Avh238 (134 aa).

Positions 1–21 are cleaved as a signal peptide; the sequence is MRGVFFVAVAVAIFARSSAEA. The RxLR-dEER signature appears at 44-68; sequence RFLRVADPEDDDLAAPADDGKTEER. Residues 49–70 form a disordered region; it reads ADPEDDDLAAPADDGKTEERAP. Over residues 61–70 the composition is skewed to basic and acidic residues; it reads DDGKTEERAP.

This sequence belongs to the RxLR effector family. In terms of assembly, interacts with host 1-aminocyclopropane-1-carboxylate synthases ACS1, ACS2, ACS3, ACS10 and ACS12.

It is found in the secreted. It localises to the host cytoplasm. Its subcellular location is the host nucleus. Its function is as follows. Effector that suppresses plant defense responses during the early stages of pathogen infection. Suppresses cell death induced by effectors and PAMPs in plant hosts. Is able to induced cell death in tomato, tobacco, eggplant, and potato, but not in A.thaliana. Interacts with and destabilizes host 1-aminocyclopropane-1-carboxylate synthases. By suppressing type2 ACS-catalyzed ethylene biosynthesis, Avh238 facilitates Phytophthora infection. The polypeptide is RxLR effector protein Avh238 (Avh238) (Phytophthora sojae (strain P6497) (Soybean stem and root rot agent)).